Here is a 262-residue protein sequence, read N- to C-terminus: Large ribosomal subunit protein uL5c (262 aa).

The N-terminal 39 residues, 1–39 (MASPSLLQSSASSFHGRFSPLAAPSSARMLSPPLRNVVK), are a transit peptide targeting the chloroplast.

Belongs to the universal ribosomal protein uL5 family. In terms of assembly, part of the 50S ribosomal subunit; contacts the 5S rRNA.

The protein resides in the plastid. It is found in the chloroplast. In terms of biological role, binds 5S rRNA, forms part of the central protuberance of the 50S subunit. This chain is Large ribosomal subunit protein uL5c (RPL5), found in Arabidopsis thaliana (Mouse-ear cress).